Here is a 347-residue protein sequence, read N- to C-terminus: UPF0284 protein LS215_0030 (347 aa).

The protein belongs to the UPF0284 family.

The sequence is that of UPF0284 protein LS215_0030 from Saccharolobus islandicus (strain L.S.2.15 / Lassen #1) (Sulfolobus islandicus).